Here is a 308-residue protein sequence, read N- to C-terminus: CMP-N-acetylneuraminate:beta-galactoside alpha-2,3-sialyltransferase (308 aa).

The Proton acceptor role is filled by aspartate 201. CMP-N-acetyl-beta-neuraminate-binding positions include 221–225 (LPHPR), 242–243 (FE), and 262–263 (SS). Catalysis depends on histidine 223, which acts as the Proton donor.

Belongs to the glycosyltransferase 52 family. Divalent metal cations are not required for the alpha-2,3-sialyltransferase activity. serves as cofactor.

Catalyzes the transfer of sialic acid from the substrate CMP-N-acetylneuraminate to lactosyl lipids as preferred acceptor substrates in vitro, forming alpha-2,3-linked sialosides. Beta-1,4-linked galactosyl lipids are better substrates than beta-1,3-linked galactosyl lipids. The natural acceptor substrate may be cell surface oligosaccharides in lipooligosaccharide (LOS), whose sialylation has been demonstrated vital for the virulence of P.multocida. This Pasteurella multocida (strain Pm70) protein is CMP-N-acetylneuraminate:beta-galactoside alpha-2,3-sialyltransferase (lst).